Reading from the N-terminus, the 172-residue chain is MAKTSAKNIRPGELNLKEKLVHINRTAKVVKGGKRFGFNAIVVVGDKEGHVGYGLGKANEVQDAIAKGIEDGKKNVIKVPIVKGTIPHQIVAKFGSAKVMMKPATPGTGLIAGGAVRAVLEMAGIHDILTKSLGSSNPHNVVKAAIKGLQSISDAYDVGERRSKSLKEVFES.

The S5 DRBM domain maps to 16–79 (LKEKLVHINR…EDGKKNVIKV (64 aa)).

It belongs to the universal ribosomal protein uS5 family. Part of the 30S ribosomal subunit. Contacts proteins S4 and S8.

Functionally, with S4 and S12 plays an important role in translational accuracy. Its function is as follows. Located at the back of the 30S subunit body where it stabilizes the conformation of the head with respect to the body. The protein is Small ribosomal subunit protein uS5 of Pelodictyon phaeoclathratiforme (strain DSM 5477 / BU-1).